The following is a 471-amino-acid chain: Protoheme IX farnesyltransferase, mitochondrial (471 aa).

The N-terminal 60 residues, Met1 to Ile60, are a transit peptide targeting the mitochondrion. 6 helical membrane passes run Ala188–Ala208, Ile247–Leu267, Ile287–Ala307, Leu312–Phe332, Leu368–Val388, and Lys430–Lys450.

This sequence belongs to the UbiA prenyltransferase family.

It is found in the mitochondrion membrane. The enzyme catalyses heme b + (2E,6E)-farnesyl diphosphate + H2O = Fe(II)-heme o + diphosphate. Functionally, converts protoheme IX and farnesyl diphosphate to heme O. This Yarrowia lipolytica (strain CLIB 122 / E 150) (Yeast) protein is Protoheme IX farnesyltransferase, mitochondrial (COX10).